The primary structure comprises 438 residues: Transmembrane protein 184C (438 aa).

7 consecutive transmembrane segments (helical) span residues 17 to 37 (LVAVIYLVSIVVAVPLCVWEL), 48 to 68 (AWFIAGIFLLLTIPISLWVIL), 86 to 106 (ILWMVPIYSLDSWIALKYPGI), 179 to 199 (YTVVRPFTTIVALICELLGIY), 212 to 232 (YLVIINNMSQLFAMYCLLLFY), 254 to 274 (VVFVSFWQAVVIALLVKVGVI), and 287 to 307 (AVATGLQDFIICIEMFLAAIA). Positions 355-438 (RGHPRKKLFP…KEPSDKSVDS (84 aa)) are disordered. Composition is skewed to low complexity over residues 374 to 390 (SLLSSSSQDAISIASSM) and 404 to 413 (TVTPQTTPTT). The residue at position 422 (serine 422) is a Phosphoserine. The segment covering 425–438 (IGEKKEPSDKSVDS) has biased composition (basic and acidic residues).

It belongs to the TMEM184 family. Widely expressed with higher expression in lung, kidney, spleen, pancreas, thymus, prostate, testis, ovary, small intestine and thyroid.

The protein resides in the membrane. In terms of biological role, possible tumor suppressor which may play a role in cell growth. This is Transmembrane protein 184C (TMEM184C) from Homo sapiens (Human).